The chain runs to 391 residues: Alkanesulfonate monooxygenase (391 aa).

Belongs to the SsuD family.

It catalyses the reaction an alkanesulfonate + FMNH2 + O2 = an aldehyde + FMN + sulfite + H2O + 2 H(+). In terms of biological role, catalyzes the desulfonation of aliphatic sulfonates. This chain is Alkanesulfonate monooxygenase, found in Paracidovorax citrulli (strain AAC00-1) (Acidovorax citrulli).